The following is a 33-amino-acid chain: Omega-conotoxin-like Vn2 (33 aa).

3 cysteine pairs are disulfide-bonded: cysteine 3/cysteine 20, cysteine 10/cysteine 24, and cysteine 19/cysteine 28. Position 33 is a proline amide (proline 33).

In terms of tissue distribution, expressed by the venom duct.

It is found in the secreted. Omega-conotoxins act at presynaptic membranes, they bind and block voltage-gated calcium channels (Cav). Has strong insecticidal properties at a dose of only 100 pmol/g of body weight (when injected into the haemocoel of the wax moth G.mellonella larvae). Provoques tremor and uncontrolled movements in insect larvae, that are typical symptoms caused by neurotoxins. On fish G.niger, intraperitoneal injection of the toxin causes full extension of the fins, change in posture, breathing difficulties (at 30 and 100 pmol/g body weight) and death (at 100 pmol/g body weight). In Conus ventricosus (Mediterranean cone), this protein is Omega-conotoxin-like Vn2.